A 432-amino-acid polypeptide reads, in one-letter code: GTPase HflX (432 aa).

Positions 202–367 (FTVALVGYTN…ELRRAVGRAM (166 aa)) constitute a Hflx-type G domain. GTP contacts are provided by residues 208 to 215 (GYTNAGKS), 233 to 237 (FATLD), 255 to 258 (DTVG), 321 to 324 (NKID), and 345 to 347 (SAQ). Mg(2+)-binding residues include S215 and T235.

It belongs to the TRAFAC class OBG-HflX-like GTPase superfamily. HflX GTPase family. In terms of assembly, monomer. Associates with the 50S ribosomal subunit. Mg(2+) is required as a cofactor.

The protein localises to the cytoplasm. Its function is as follows. GTPase that associates with the 50S ribosomal subunit and may have a role during protein synthesis or ribosome biogenesis. This chain is GTPase HflX, found in Magnetococcus marinus (strain ATCC BAA-1437 / JCM 17883 / MC-1).